Reading from the N-terminus, the 447-residue chain is Ion-translocating oxidoreductase complex subunit C (447 aa).

2 consecutive 4Fe-4S ferredoxin-type domains span residues 359 to 389 (AEVL…GRIA) and 399 to 430 (RCRE…LIRY). 8 residues coordinate [4Fe-4S] cluster: cysteine 369, cysteine 372, cysteine 375, cysteine 379, cysteine 408, cysteine 411, cysteine 414, and cysteine 418.

It belongs to the 4Fe4S bacterial-type ferredoxin family. RnfC subfamily. The Rnf complex is probably composed of eight subunits, including RnfA, RnfB, RnfC, RnfD, RnfE and RnfG. It depends on [4Fe-4S] cluster as a cofactor.

Its subcellular location is the cell membrane. Its function is as follows. Part of a membrane-bound complex that couples electron transfer with translocation of ions across the membrane. Catalyzes Na(+) transport, most probably coupled to electron transfer from reduced ferredoxin to methanophenazine and heterodisulfide reductase. Involved in heterodisulfide reduction during methanogenesis from acetate. The chain is Ion-translocating oxidoreductase complex subunit C from Methanosarcina acetivorans (strain ATCC 35395 / DSM 2834 / JCM 12185 / C2A).